A 310-amino-acid polypeptide reads, in one-letter code: NADP-dependent D-sorbitol-6-phosphate dehydrogenase (310 aa).

The active-site Proton donor is the Y48. H108 contacts substrate. 210–272 (TPLGGAAANK…SSKIQRLKEN (63 aa)) contributes to the NADP(+) binding site.

The protein belongs to the aldo/keto reductase family.

The enzyme catalyses D-sorbitol 6-phosphate + NADP(+) = aldehydo-D-glucose 6-phosphate + NADPH + H(+). Synthesizes sorbitol-6-phosphate, a key intermediate in the synthesis of sorbitol which is a major photosynthetic product in many members of the Rosaceae family. The chain is NADP-dependent D-sorbitol-6-phosphate dehydrogenase (S6PDH) from Malus domestica (Apple).